Consider the following 499-residue polypeptide: Glycerol kinase (499 aa).

Residue Thr-13 participates in ADP binding. 3 residues coordinate ATP: Thr-13, Thr-14, and Ser-15. Thr-13 is a binding site for sn-glycerol 3-phosphate. Arg-17 lines the ADP pocket. Arg-83, Glu-84, Tyr-135, and Asp-245 together coordinate sn-glycerol 3-phosphate. Residues Arg-83, Glu-84, Tyr-135, Asp-245, and Gln-246 each contribute to the glycerol site. ADP contacts are provided by Thr-267 and Gly-310. Positions 267, 310, 314, and 411 each coordinate ATP. Positions 411 and 415 each coordinate ADP.

Belongs to the FGGY kinase family.

The enzyme catalyses glycerol + ATP = sn-glycerol 3-phosphate + ADP + H(+). Its pathway is polyol metabolism; glycerol degradation via glycerol kinase pathway; sn-glycerol 3-phosphate from glycerol: step 1/1. With respect to regulation, inhibited by fructose 1,6-bisphosphate (FBP). Its function is as follows. Key enzyme in the regulation of glycerol uptake and metabolism. Catalyzes the phosphorylation of glycerol to yield sn-glycerol 3-phosphate. This Stenotrophomonas maltophilia (strain R551-3) protein is Glycerol kinase.